The primary structure comprises 148 residues: Macrodomain Ter protein (148 aa).

This sequence belongs to the MatP family. Homodimer.

The protein localises to the cytoplasm. Functionally, required for spatial organization of the terminus region of the chromosome (Ter macrodomain) during the cell cycle. Prevents early segregation of duplicated Ter macrodomains during cell division. Binds specifically to matS, which is a 13 bp signature motif repeated within the Ter macrodomain. This is Macrodomain Ter protein from Haemophilus ducreyi (strain 35000HP / ATCC 700724).